The sequence spans 248 residues: Ribosomal RNA small subunit methyltransferase J (248 aa).

S-adenosyl-L-methionine contacts are provided by residues 98–99 (RD), 114–115 (ER), 150–151 (SS), and aspartate 168.

This sequence belongs to the methyltransferase superfamily. RsmJ family.

Its subcellular location is the cytoplasm. The catalysed reaction is guanosine(1516) in 16S rRNA + S-adenosyl-L-methionine = N(2)-methylguanosine(1516) in 16S rRNA + S-adenosyl-L-homocysteine + H(+). In terms of biological role, specifically methylates the guanosine in position 1516 of 16S rRNA. This chain is Ribosomal RNA small subunit methyltransferase J, found in Shewanella amazonensis (strain ATCC BAA-1098 / SB2B).